Reading from the N-terminus, the 108-residue chain is ATP synthase peripheral stalk subunit F6, mitochondrial (108 aa).

A mitochondrion-targeting transit peptide spans 1 to 32 (MILQRLFRLSSAVQSAISVSWRRNIGITAVAF). N6-acetyllysine is present on residues K41, K46, and K79. An N6-acetyllysine; alternate mark is found at K84 and K99. 2 positions are modified to N6-succinyllysine; alternate: K84 and K99. The residue at position 105 (K105) is an N6-acetyllysine. S108 is modified (phosphoserine).

It belongs to the eukaryotic ATPase subunit F6 family. As to quaternary structure, component of the ATP synthase complex composed at least of ATP5F1A/subunit alpha, ATP5F1B/subunit beta, ATP5MC1/subunit c (homooctomer), MT-ATP6/subunit a, MT-ATP8/subunit 8, ATP5ME/subunit e, ATP5MF/subunit f, ATP5MG/subunit g, ATP5MK/subunit k, ATP5MJ/subunit j, ATP5F1C/subunit gamma, ATP5F1D/subunit delta, ATP5F1E/subunit epsilon, ATP5PF/subunit F6, ATP5PB/subunit b, ATP5PD/subunit d, ATP5PO/subunit OSCP. ATP synthase complex consists of a soluble F(1) head domain (subunits alpha(3) and beta(3)) - the catalytic core - and a membrane F(0) domain - the membrane proton channel (subunits c, a, 8, e, f, g, k and j). These two domains are linked by a central stalk (subunits gamma, delta, and epsilon) rotating inside the F1 region and a stationary peripheral stalk (subunits F6, b, d, and OSCP).

Its subcellular location is the mitochondrion. It is found in the mitochondrion inner membrane. In terms of biological role, subunit F6, of the mitochondrial membrane ATP synthase complex (F(1)F(0) ATP synthase or Complex V) that produces ATP from ADP in the presence of a proton gradient across the membrane which is generated by electron transport complexes of the respiratory chain. ATP synthase complex consist of a soluble F(1) head domain - the catalytic core - and a membrane F(1) domain - the membrane proton channel. These two domains are linked by a central stalk rotating inside the F(1) region and a stationary peripheral stalk. During catalysis, ATP synthesis in the catalytic domain of F(1) is coupled via a rotary mechanism of the central stalk subunits to proton translocation. In vivo, can only synthesize ATP although its ATP hydrolase activity can be activated artificially in vitro. Part of the complex F(0) domain. Part of the complex F(0) domain and the peripheric stalk, which acts as a stator to hold the catalytic alpha(3)beta(3) subcomplex and subunit a/ATP6 static relative to the rotary elements. This Bos taurus (Bovine) protein is ATP synthase peripheral stalk subunit F6, mitochondrial.